Here is a 778-residue protein sequence, read N- to C-terminus: Acyl-homoserine lactone acylase PvdQ (778 aa).

The N-terminal stretch at 1–25 is a signal peptide; sequence MTISRQFTGLTLAGLFLGLSLSAQA. Residues 196-218 constitute a propeptide, spacer peptide; that stretch reads IENNARAYQLADTRLQRFALDRG. The active-site Nucleophile is the Ser219.

It belongs to the peptidase S45 family. Heterodimer of an alpha subunit and a beta subunit processed from the same precursor.

The protein localises to the periplasm. The catalysed reaction is an N-acyl-L-homoserine lactone + H2O = L-homoserine lactone + a carboxylate. In terms of biological role, catalyzes the deacylation of acyl-homoserine lactone (AHL or acyl-HSL), releasing homoserine lactone (HSL) and the corresponding fatty acid. Possesses a specificity for the degradation of long-chain acyl-HSLs (side chains of 11 to 14 carbons in length). This is Acyl-homoserine lactone acylase PvdQ (pvdQ) from Pseudomonas fluorescens (strain Pf0-1).